A 395-amino-acid polypeptide reads, in one-letter code: Zinc-regulated GTPase metalloprotein activator 1F (395 aa).

Residues 1-22 (MLPAVGSVDEEEDPAEEDCPEL) are disordered. The span at 8 to 20 (VDEEEDPAEEDCP) shows a compositional bias: acidic residues. The psi-PxLVp motif signature appears at 17–24 (EDCPELVP). A GTP-binding site is contributed by 49–56 (GYLGAGKT). Zn(2+) is bound by residues C107, C109, and C110. The CXCC motif signature appears at 107 to 110 (CLCC). GTP is bound by residues 110-114 (CSVKD) and 203-206 (NKTD). One can recognise a CobW C-terminal domain in the interval 274 to 377 (IVTITFDVPG…ILKQLFIATV (104 aa)).

Belongs to the SIMIBI class G3E GTPase family. ZNG1 subfamily.

Its subcellular location is the nucleus. The enzyme catalyses GTP + H2O = GDP + phosphate + H(+). Its function is as follows. Zinc chaperone that directly transfers zinc cofactor to target metalloproteins, thereby activating them. Catalyzes zinc insertion into the active site of methionine aminopeptidase METAP1, which function to cleave the initiator methionine from polypeptides during or after protein translation. Mechanistically, the N-terminal psi-PxLVp motif binds to the C6H2-type zinc finger of inactive form of METAP1. After formation of the docked complex, zinc is transferred from the CXCC motif in the GTPase domain of ZNG1F to the zinc binding site in the peptidase domain of METAP1 in a process requiring GTP hydrolysis. GTP/GDP exchange is required for release of active METAP1. This is Zinc-regulated GTPase metalloprotein activator 1F from Homo sapiens (Human).